An 889-amino-acid polypeptide reads, in one-letter code: MSNPFAYLAEPLDPAQPGKKFFNLNKLDYSRYGRLPFSIRVLLEAAVRNCDKFLVKKEDIENILNWNVTQHMNIEVPFKPARVILQDFTGVPSVVDFAAMRDAVKKLGGDPEKINPICPVDLVIDHSIQVDFNRRADSLQKNQDLEFERNRERFEFLKWGSKAFRNMRIIPPGSGIIHQVNLEYLARVVFDQDGYYYPDSLVGTDSHTTMIDGLGVLGWGVGGIEAEAVMLGQPISMVLPQVIGYRLMGKPHPLVTSTDIVLTITKHLRQVGVVGKFVEFFGLGVAQLSIADRATIANMCPEYGATATFFPVDEVSIKYLVQTGRDESKVKQIRKYLQAVGMFRDYSDPSQDPDFTQVVELDLKTVVPCCSGPKRPQDKVAVSDMKKDFESCLGAKQGFKGFQVAPDHHNDHKTFIYNDSEFTLSHGSVVIAAITSCTNTSNPSVMLGAGLLAKKAVDAGLNVKPYVKTSLSPGSGVVTYYLRESGVMPYLSQLGFDVVGYGCMTCIGNSGPLPEPVVEAITQGDLVAVGVLSGNRNFEGRVHPNTRANYLASPPLVIAYAIAGTIRIDFEKEPLGTNAKGQQVFLRDIWPTREEIQAVERQYVIPGMFTEVYQKIETVNASWNALAAPSDKLYLWNPKSTYIKSPPFFENLTLDLQPPKSIVDAYVLLNLGDSVTTDHISPAGNIARNSPAARYLTNRGLTPREFNSYGSRRGNDAIMARGTFANIRLLNRFLNKQAPQTIHLPSGETLDVFDAAERYQQEGHPLIVLAGKEYGSGSSRDWAAKGPFLLGIKAVLAESYERIHRSNLVGMGVIPLEYLPGENADSLGLTGRERYTIIIPENLTPRMHVQVKLDTGKTFQAVIRFDTDVELTYLHNGGILNYMIRKMAK.

Residues Gln86 and 205–207 (DSH) each bind substrate. The [4Fe-4S] cluster site is built by Cys437, Cys503, and Cys506. Substrate-binding positions include Arg536, Arg541, Arg699, and 779–780 (SR).

It belongs to the aconitase/IPM isomerase family. As to quaternary structure, interacts (when associated with the 4Fe-4S) with FBXL5. Interacts with frataxin(81-210). [4Fe-4S] cluster is required as a cofactor.

Its subcellular location is the cytoplasm. The protein resides in the cytosol. It carries out the reaction citrate = D-threo-isocitrate. Its function is as follows. Bifunctional iron sensor that switches between 2 activities depending on iron availability. Iron deprivation, promotes its mRNA binding activity through which it regulates the expression of genes involved in iron uptake, sequestration and utilization. Binds to iron-responsive elements (IRES) in the untranslated region of target mRNAs preventing for instance the translation of ferritin and aminolevulinic acid synthase and stabilizing the transferrin receptor mRNA. Conversely, when cellular iron levels are high, binds a 4Fe-4S cluster which precludes RNA binding activity and promotes the aconitase activity, the isomerization of citrate to isocitrate via cis-aconitate. The chain is Cytoplasmic aconitate hydratase (ACO1) from Oryctolagus cuniculus (Rabbit).